Reading from the N-terminus, the 454-residue chain is Phosphoglucosamine mutase (454 aa).

Catalysis depends on serine 104, which acts as the Phosphoserine intermediate. Mg(2+)-binding residues include serine 104, aspartate 244, aspartate 246, and aspartate 248. Phosphoserine is present on serine 104.

It belongs to the phosphohexose mutase family. It depends on Mg(2+) as a cofactor. Post-translationally, activated by phosphorylation.

It carries out the reaction alpha-D-glucosamine 1-phosphate = D-glucosamine 6-phosphate. Functionally, catalyzes the conversion of glucosamine-6-phosphate to glucosamine-1-phosphate. This is Phosphoglucosamine mutase from Lacticaseibacillus paracasei (strain ATCC 334 / BCRC 17002 / CCUG 31169 / CIP 107868 / KCTC 3260 / NRRL B-441) (Lactobacillus paracasei).